Consider the following 553-residue polypeptide: PE cleavage protein A (553 aa).

The PE domain maps to 1–92; the sequence is MSLLVVAPEW…SAGSYSAAEA (92 aa). D293 is a catalytic residue.

This sequence belongs to the mycobacterial PE family. PGRS subfamily. In terms of processing, undergoes auto-proteolytic processing.

The protein localises to the secreted. Its subcellular location is the cell surface. Functionally, aspartic protease that processes the lipase LipY and other PE_PGRS proteins. Can also cleave itself. Cleaves LipY both inside the PE domain, before amino acid 98, and after amino acids 136 and 149. Involved in virulence. The chain is PE cleavage protein A from Mycobacterium marinum (strain ATCC BAA-535 / M).